A 357-amino-acid chain; its full sequence is N-acetyl-gamma-glutamyl-phosphate reductase (357 aa).

The active site involves C151.

It belongs to the NAGSA dehydrogenase family. Type 1 subfamily.

Its subcellular location is the cytoplasm. The catalysed reaction is N-acetyl-L-glutamate 5-semialdehyde + phosphate + NADP(+) = N-acetyl-L-glutamyl 5-phosphate + NADPH + H(+). It participates in amino-acid biosynthesis; L-arginine biosynthesis; N(2)-acetyl-L-ornithine from L-glutamate: step 3/4. Catalyzes the NADPH-dependent reduction of N-acetyl-5-glutamyl phosphate to yield N-acetyl-L-glutamate 5-semialdehyde. This Corynebacterium kroppenstedtii (strain DSM 44385 / JCM 11950 / CIP 105744 / CCUG 35717) protein is N-acetyl-gamma-glutamyl-phosphate reductase.